The following is a 149-amino-acid chain: Protein SprT-like (149 aa).

Residues 4–144 form the SprT-like domain; the sequence is TDYVKQVSLE…GLCRGKLLLV (141 aa). Position 64 (H64) interacts with Zn(2+). Residue E65 is part of the active site. H68 contacts Zn(2+).

The protein belongs to the SprT family. The cofactor is Zn(2+).

The protein localises to the cytoplasm. This chain is Protein SprT-like, found in Streptococcus pneumoniae serotype 4 (strain ATCC BAA-334 / TIGR4).